The following is a 400-amino-acid chain: Na(+)/H(+) antiporter NhaA (400 aa).

The next 11 helical transmembrane spans lie at Phe10–Ile30, Ala60–Leu80, Ile95–Phe115, Gly126–Gly146, Val155–Phe175, Asn178–Leu198, Val218–Ile238, Gly265–Gly285, Ile295–Phe315, Ala334–Ala354, and Leu364–Thr384.

It belongs to the NhaA Na(+)/H(+) (TC 2.A.33) antiporter family.

It localises to the cell inner membrane. It carries out the reaction Na(+)(in) + 2 H(+)(out) = Na(+)(out) + 2 H(+)(in). Na(+)/H(+) antiporter that extrudes sodium in exchange for external protons. This Psychrobacter cryohalolentis (strain ATCC BAA-1226 / DSM 17306 / VKM B-2378 / K5) protein is Na(+)/H(+) antiporter NhaA.